A 571-amino-acid chain; its full sequence is Glutamate--tRNA ligase (571 aa).

The span at 75 to 88 shows a compositional bias: basic and acidic residues; that stretch reads GGPREDVARDKEGL. Residues 75-98 form a disordered region; the sequence is GGPREDVARDKEGLKPLPGAEPGN. Residues 105–115 carry the 'HIGH' region motif; sequence PNPSGPLHIGH.

It belongs to the class-I aminoacyl-tRNA synthetase family. Glutamate--tRNA ligase type 2 subfamily.

It is found in the cytoplasm. The enzyme catalyses tRNA(Glu) + L-glutamate + ATP = L-glutamyl-tRNA(Glu) + AMP + diphosphate. Its function is as follows. Catalyzes the attachment of glutamate to tRNA(Glu) in a two-step reaction: glutamate is first activated by ATP to form Glu-AMP and then transferred to the acceptor end of tRNA(Glu). In Methanopyrus kandleri (strain AV19 / DSM 6324 / JCM 9639 / NBRC 100938), this protein is Glutamate--tRNA ligase.